The chain runs to 357 residues: Histidinol-phosphate aminotransferase (357 aa).

The residue at position 221 (lysine 221) is an N6-(pyridoxal phosphate)lysine.

This sequence belongs to the class-II pyridoxal-phosphate-dependent aminotransferase family. Histidinol-phosphate aminotransferase subfamily. The cofactor is pyridoxal 5'-phosphate.

The enzyme catalyses L-histidinol phosphate + 2-oxoglutarate = 3-(imidazol-4-yl)-2-oxopropyl phosphate + L-glutamate. Its pathway is amino-acid biosynthesis; L-histidine biosynthesis; L-histidine from 5-phospho-alpha-D-ribose 1-diphosphate: step 7/9. This is Histidinol-phosphate aminotransferase (hisC) from Sulfurisphaera tokodaii (strain DSM 16993 / JCM 10545 / NBRC 100140 / 7) (Sulfolobus tokodaii).